The following is a 264-amino-acid chain: Fructose-1,6-bisphosphatase/inositol-1-monophosphatase (264 aa).

Residues Glu70, Asp86, Leu88, and Asp89 each coordinate Mg(2+). Substrate contacts are provided by residues 89 to 91, Arg185, and Ala190; that span reads DGT. Asp214 is a binding site for Mg(2+).

The protein belongs to the inositol monophosphatase superfamily. FBPase class 4 family. The cofactor is Mg(2+).

The enzyme catalyses beta-D-fructose 1,6-bisphosphate + H2O = beta-D-fructose 6-phosphate + phosphate. It catalyses the reaction a myo-inositol phosphate + H2O = myo-inositol + phosphate. Its function is as follows. Phosphatase with broad specificity; it can dephosphorylate fructose 1,6-bisphosphate, and both D and L isomers of inositol-1-phosphate (I-1-P). This is Fructose-1,6-bisphosphatase/inositol-1-monophosphatase (suhB) from Aquifex aeolicus (strain VF5).